The sequence spans 559 residues: Transcription activator of gluconeogenesis ERT1-2 (559 aa).

Residues 23–51 (CIHCQRTHLTCDNNRPCERCVARGFADTC) constitute a DNA-binding region (zn(2)-C6 fungal-type). 3 disordered regions span residues 63 to 159 (DDKE…TPSQ), 231 to 263 (SNSL…TPSA), and 329 to 349 (AGQP…DSPS). Low complexity-rich tracts occupy residues 139 to 159 (QGPQ…TPSQ) and 231 to 244 (SNSL…QSPN). Residues 245–260 (THSPHNQDQPTPQAAT) are compositionally biased toward polar residues. The PAS domain maps to 440-512 (ALLEYQKFIS…ELFSRIAFGD (73 aa)).

The protein belongs to the ERT1/acuK family.

Its subcellular location is the nucleus. Its function is as follows. Transcription factor which regulates nonfermentable carbon utilization. Activator of gluconeogenetic genes. The chain is Transcription activator of gluconeogenesis ERT1-2 (ERT1-2) from Yarrowia lipolytica (strain CLIB 122 / E 150) (Yeast).